The primary structure comprises 154 residues: Superoxide dismutase [Cu-Zn] (154 aa).

The Cu cation site is built by His-45, His-47, and His-62. Cys-56 and Cys-146 are disulfide-bonded. The Zn(2+) site is built by His-62, His-70, His-79, and Asp-82. Residue His-120 participates in Cu cation binding.

Belongs to the Cu-Zn superoxide dismutase family. In terms of assembly, homodimer. It depends on Cu cation as a cofactor. Zn(2+) serves as cofactor.

It localises to the cytoplasm. The catalysed reaction is 2 superoxide + 2 H(+) = H2O2 + O2. Destroys radicals which are normally produced within the cells and which are toxic to biological systems. The protein is Superoxide dismutase [Cu-Zn] of Bombyx mori (Silk moth).